Reading from the N-terminus, the 342-residue chain is Dihydroorotase (342 aa).

The Zn(2+) site is built by His-13 and His-15. Residues 15-17 (HLR) and Asn-41 each bind substrate. 3 residues coordinate Zn(2+): Lys-98, His-135, and His-173. N6-carboxylysine is present on Lys-98. Position 135 (His-135) interacts with substrate. Residue Leu-218 participates in substrate binding. Asp-246 is a binding site for Zn(2+). The active site involves Asp-246. Substrate contacts are provided by His-250 and Ala-262.

Belongs to the metallo-dependent hydrolases superfamily. DHOase family. Class II DHOase subfamily. Homodimer. Requires Zn(2+) as cofactor.

It catalyses the reaction (S)-dihydroorotate + H2O = N-carbamoyl-L-aspartate + H(+). It participates in pyrimidine metabolism; UMP biosynthesis via de novo pathway; (S)-dihydroorotate from bicarbonate: step 3/3. In terms of biological role, catalyzes the reversible cyclization of carbamoyl aspartate to dihydroorotate. The sequence is that of Dihydroorotase from Vibrio cholerae serotype O1 (strain ATCC 39315 / El Tor Inaba N16961).